A 428-amino-acid polypeptide reads, in one-letter code: Adenylosuccinate synthetase (428 aa).

GTP is bound by residues 12 to 18 and 40 to 42; these read GDEGKGK and GHT. Catalysis depends on Asp-13, which acts as the Proton acceptor. Asp-13 and Gly-40 together coordinate Mg(2+). IMP-binding positions include 13–16, 38–41, Thr-129, Arg-143, Gln-224, Thr-239, and Arg-303; these read DEGK and NAGH. His-41 (proton donor) is an active-site residue. 299-305 is a substrate binding site; the sequence is VTTGRIR. GTP-binding positions include Arg-305, 331 to 333, and 410 to 412; these read KVD and AYG.

This sequence belongs to the adenylosuccinate synthetase family. Homodimer. The cofactor is Mg(2+).

Its subcellular location is the cytoplasm. It carries out the reaction IMP + L-aspartate + GTP = N(6)-(1,2-dicarboxyethyl)-AMP + GDP + phosphate + 2 H(+). The protein operates within purine metabolism; AMP biosynthesis via de novo pathway; AMP from IMP: step 1/2. Plays an important role in the de novo pathway of purine nucleotide biosynthesis. Catalyzes the first committed step in the biosynthesis of AMP from IMP. The polypeptide is Adenylosuccinate synthetase (Francisella tularensis subsp. tularensis (strain FSC 198)).